The following is a 675-amino-acid chain: Myosin-binding protein 3 (675 aa).

The helical transmembrane segment at 17 to 37 (ITVILVYAFLEWLLMFFIFLN) threads the bilayer. Disordered regions lie at residues 225–274 (LRSI…EEET) and 286–315 (SKNF…TPTS). The segment covering 238–251 (AKSRVSEDEQRNDD) has biased composition (basic and acidic residues). Residues 355–453 (RTIERLRETV…QLQRELEVYR (99 aa)) enclose the GTD-binding domain. A compositionally biased stretch (acidic residues) spans 474 to 496 (CEADDDDKEEENREEDNSSEMDV). 3 disordered regions span residues 474–497 (CEAD…MDVD), 542–565 (DKES…GHGG), and 582–605 (AENE…GSDS). Residues 596–605 (SDEKNFGSDS) are compositionally biased toward basic and acidic residues. Residues 605-633 (SEKLEIIKQVDSVYERLQELETDGEFLKN) are a coiled coil.

In terms of assembly, interacts with myosin XI-K.

Its subcellular location is the membrane. Functionally, membrane-anchored myosin receptors that define a distinct, plant-specific transport vesicle compartment. The polypeptide is Myosin-binding protein 3 (Arabidopsis thaliana (Mouse-ear cress)).